The chain runs to 628 residues: Beta-galactosidase large subunit (628 aa).

E468 functions as the Proton donor in the catalytic mechanism. E536 (nucleophile) is an active-site residue.

This sequence belongs to the glycosyl hydrolase 2 family. Heterodimer of a large (LacL) and a small subunit (LacM).

It carries out the reaction Hydrolysis of terminal non-reducing beta-D-galactose residues in beta-D-galactosides.. Its function is as follows. Component of a beta-galactosidase. The chain is Beta-galactosidase large subunit from Lactobacillus helveticus (Lactobacillus suntoryeus).